The sequence spans 129 residues: Phosphoribosyl-AMP cyclohydrolase (129 aa).

Residue Asp-82 coordinates Mg(2+). Cys-83 is a Zn(2+) binding site. Mg(2+) contacts are provided by Asp-84 and Asp-86. Residues Cys-99 and Cys-106 each coordinate Zn(2+).

Belongs to the PRA-CH family. In terms of assembly, homodimer. It depends on Mg(2+) as a cofactor. Requires Zn(2+) as cofactor.

It localises to the cytoplasm. The enzyme catalyses 1-(5-phospho-beta-D-ribosyl)-5'-AMP + H2O = 1-(5-phospho-beta-D-ribosyl)-5-[(5-phospho-beta-D-ribosylamino)methylideneamino]imidazole-4-carboxamide. It functions in the pathway amino-acid biosynthesis; L-histidine biosynthesis; L-histidine from 5-phospho-alpha-D-ribose 1-diphosphate: step 3/9. In terms of biological role, catalyzes the hydrolysis of the adenine ring of phosphoribosyl-AMP. The sequence is that of Phosphoribosyl-AMP cyclohydrolase from Methanosarcina barkeri (strain Fusaro / DSM 804).